We begin with the raw amino-acid sequence, 141 residues long: Large ribosomal subunit protein uL11 (141 aa).

It belongs to the universal ribosomal protein uL11 family. Part of the ribosomal stalk of the 50S ribosomal subunit. Interacts with L10 and the large rRNA to form the base of the stalk. L10 forms an elongated spine to which L12 dimers bind in a sequential fashion forming a multimeric L10(L12)X complex. Post-translationally, one or more lysine residues are methylated.

In terms of biological role, forms part of the ribosomal stalk which helps the ribosome interact with GTP-bound translation factors. The sequence is that of Large ribosomal subunit protein uL11 from Streptococcus sanguinis (strain SK36).